Reading from the N-terminus, the 381-residue chain is MGCLGNSSKTAEDQGVDEKERREANKKIEKQLQKERLAYKATHRLLLLGAGESGKSTIVKQMRILHVNGSNPEEKKQKILDIRKNVKDAIVTIVSAMSTIIPPVPLANPENQFRSDYIKSIAPITDFEYSQEFFDHVKKLWDDEGVKACFERSNEYQLIDCAQYFLERIDSVSLVDYTPTDQDLLRCRVLTSGIFETRFQVDKVNFHMFDVGGQRDERRKWIQCFNDVTAIIYVAACSSYNMVIREDNNTNRLRESLDLFESIWNNRWLRTISIILFLNKQDMLAEKVLAGKSKIEDYFPEYANYTVPEDATPDAGEDPKVTRAKFFIRDLFLRISTATGDGKHYCYPHFTCAVDTENIRRVFNDCRDIIQRMHLKQYELL.

A disordered region spans residues 1–25 (MGCLGNSSKTAEDQGVDEKERREAN). Gly-2 carries N-palmitoyl glycine lipidation. Cys-3 is lipidated: S-palmitoyl cysteine. A compositionally biased stretch (basic and acidic residues) spans 10 to 25 (TAEDQGVDEKERREAN). Positions 41-381 (ATHRLLLLGA…RMHLKQYELL (341 aa)) constitute a G-alpha domain. The G1 motif stretch occupies residues 44–57 (RLLLLGAGESGKST). Residues Glu-52, Ser-53, Gly-54, Lys-55, Ser-56, and Thr-57 each coordinate GTP. A Mg(2+)-binding site is contributed by Ser-56. At Thr-178 the chain carries Phosphothreonine. The tract at residues 183-191 (DLLRCRVLT) is G2 motif. Positions 185, 186, and 191 each coordinate GTP. The Mg(2+) site is built by Thr-191 and Asp-210. The tract at residues 206–215 (FHMFDVGGQR) is G3 motif. Residues Gly-213, Asn-279, Lys-280, Asp-282, and Ala-353 each contribute to the GTP site. The segment at 275–282 (ILFLNKQD) is G4 motif. Residues 351 to 356 (TCAVDT) form a G5 motif region.

It belongs to the G-alpha family. G(s) subfamily. In terms of assembly, g proteins are composed of 3 units; alpha, beta and gamma. The alpha chain contains the guanine nucleotide binding site. Interacts with GAS2L2. Interacts (GDP-bound form) with RIC8B (via C-terminus); promoting GNAL folding and association with the plasma membrane.

It localises to the cell membrane. It carries out the reaction GTP + H2O = GDP + phosphate + H(+). Guanine nucleotide-binding protein (G protein) involved as transducer in olfactory signal transduction controlled by G protein-coupled receptors (GPCRs). Contains the guanine nucleotide binding site and alternates between an active, GTP-bound state and an inactive, GDP-bound state. Signaling by an activated GPCR promotes GDP release and GTP binding. The alpha subunit has a low GTPase activity that converts bound GTP to GDP, thereby terminating the signal. Both GDP release and GTP hydrolysis are modulated by numerous regulatory proteins. GNAL/G(olf) alpha specifically mediates olfactory signal transduction within the olfactory neuroepithelium and the basal ganglia following GPCRs activation. Acts by promoting the specific activation of adenylyl cyclase ADCY3, resulting in increased levels of the signaling molecule cAMP. The chain is Guanine nucleotide-binding protein G(olf) subunit alpha from Rattus norvegicus (Rat).